The chain runs to 48 residues: Large ribosomal subunit protein bL34 (48 aa).

This sequence belongs to the bacterial ribosomal protein bL34 family.

This is Large ribosomal subunit protein bL34 from Gloeothece citriformis (strain PCC 7424) (Cyanothece sp. (strain PCC 7424)).